The sequence spans 550 residues: Aspartate--tRNA ligase (550 aa).

Residue glutamate 162 coordinates L-aspartate. Residues 186–189 (QIYK) form an aspartate region. Arginine 208 contributes to the L-aspartate binding site. ATP contacts are provided by residues 208-210 (RDE) and glutamine 217. Histidine 417 is a binding site for L-aspartate. Glutamate 451 contributes to the ATP binding site. Residue arginine 458 participates in L-aspartate binding. Position 499–502 (499–502 (GIDR)) interacts with ATP.

Belongs to the class-II aminoacyl-tRNA synthetase family. Type 1 subfamily. In terms of assembly, homodimer.

The protein resides in the cytoplasm. The enzyme catalyses tRNA(Asp) + L-aspartate + ATP = L-aspartyl-tRNA(Asp) + AMP + diphosphate. Catalyzes the attachment of L-aspartate to tRNA(Asp) in a two-step reaction: L-aspartate is first activated by ATP to form Asp-AMP and then transferred to the acceptor end of tRNA(Asp). This chain is Aspartate--tRNA ligase, found in Mycoplasma genitalium (strain ATCC 33530 / DSM 19775 / NCTC 10195 / G37) (Mycoplasmoides genitalium).